A 344-amino-acid chain; its full sequence is Nicotinate-nucleotide--dimethylbenzimidazole phosphoribosyltransferase (344 aa).

The active-site Proton acceptor is the Glu310.

This sequence belongs to the CobT family.

It carries out the reaction 5,6-dimethylbenzimidazole + nicotinate beta-D-ribonucleotide = alpha-ribazole 5'-phosphate + nicotinate + H(+). The protein operates within nucleoside biosynthesis; alpha-ribazole biosynthesis; alpha-ribazole from 5,6-dimethylbenzimidazole: step 1/2. Functionally, catalyzes the synthesis of alpha-ribazole-5'-phosphate from nicotinate mononucleotide (NAMN) and 5,6-dimethylbenzimidazole (DMB). The protein is Nicotinate-nucleotide--dimethylbenzimidazole phosphoribosyltransferase of Chromobacterium violaceum (strain ATCC 12472 / DSM 30191 / JCM 1249 / CCUG 213 / NBRC 12614 / NCIMB 9131 / NCTC 9757 / MK).